Here is an 85-residue protein sequence, read N- to C-terminus: Hepcidin (85 aa).

The signal sequence occupies residues 1–24 (MKTFSVAVAVAVVLAFICLQESSA). The propeptide occupies 25 to 64 (VPVTEVQELEEPMSNEYQEMPVESWKMPYNNRHKRHSSPG). Disulfide bonds link Cys-66-Cys-83, Cys-69-Cys-72, Cys-70-Cys-79, and Cys-73-Cys-82.

As to expression, predominantly expressed in liver.

Its subcellular location is the secreted. In terms of biological role, seems to act as a signaling molecule involved in the maintenance of iron homeostasis. Seems to be required in conjunction with HFE to regulate both intestinal iron absorption and iron storage in macrophages. Its function is as follows. Antimicrobial activity against Gram-negative bacteria such as E.coli. This chain is Hepcidin (hamp), found in Morone chrysops x Morone saxatilis (White bass x Striped bass).